The primary structure comprises 408 residues: Tripartite motif-containing protein 59 (408 aa).

The RING-type zinc finger occupies 10-60 (CSICYSLFEDPRVLPCSHTFCRSCLEGVIQLSSNFSIWRPLRVPLKCPNCR). Residues 92 to 134 (SDVATCSEHYRQPLNVYCLLDKKLVCGHCLTIGKHNGHPIDDL) form a B box-type zinc finger. Residues cysteine 97, histidine 100, cysteine 120, and histidine 126 each contribute to the Zn(2+) site. Residues 163–247 (LIEKLKEQKA…LNTSIQKEES (85 aa)) are a coiled coil. Residues 333 to 353 (ANPLSVTFIFTVIIAIAVLSF) form a helical membrane-spanning segment.

It belongs to the TRIM/RBCC family. In terms of assembly, interacts with ECSIT.

The protein localises to the endoplasmic reticulum membrane. May serve as a multifunctional regulator for innate immune signaling pathways. This chain is Tripartite motif-containing protein 59 (TRIM59), found in Gallus gallus (Chicken).